Here is a 412-residue protein sequence, read N- to C-terminus: NF-kappa-B essential modulator (412 aa).

A disordered region spans residues 1-48 (MNKHPWKNQLSEMVQPSGGPAEDQDMLGEESSLGKPAMLHLPSEQGTP). The segment at 1 to 197 (MNKHPWKNQL…REVLQQQHSV (197 aa)) is required for interaction with and ubiquitination by MARCHF2. Phosphoserine; by IKKB is present on residues Ser31 and Ser43. An interaction with CHUK/IKBKB region spans residues 44 to 111 (EQGTPETLQR…KLVERLSLEK (68 aa)). Residues 49 to 345 (ETLQRCLEEN…LKVGCHESAR (297 aa)) are a coiled coil. A Phosphoserine modification is found at Ser68. Position 85 is a phosphoserine; by ATM (Ser85). Residues Lys111, Lys139, Lys143, Lys226, and Lys246 each participate in a glycyl lysine isopeptide (Lys-Gly) (interchain with G-Cter in ubiquitin) cross-link. An interaction with TANK region spans residues 150 to 250 (LGELQESQSR…YDSHIKSSKG (101 aa)). Residues 242 to 343 (DSHIKSSKGM…NKLKVGCHES (102 aa)) form a ubiquitin-binding (UBAN) region. The self-association stretch occupies residues 246-358 (KSSKGMQLED…MRKRHVETPQ (113 aa)). Residues 249–412 (KGMQLEDLRQ…LQIHVMECIE (164 aa)) are required for interaction with TNFAIP3. A linear polyubiquitin-binding, does not bind to 'Lys-63'-linked polyubiquitin region spans residues 250-339 (GMQLEDLRQQ…QREFNKLKVG (90 aa)). Lys270 participates in a covalent cross-link: Glycyl lysine isopeptide (Lys-Gly) (interchain with G-Cter in SUMO); alternate. Lys270 is covalently cross-linked (Glycyl lysine isopeptide (Lys-Gly) (interchain with G-Cter in ubiquitin); alternate). Glycyl lysine isopeptide (Lys-Gly) (interchain with G-Cter in ubiquitin) cross-links involve residues Lys276, Lys278, Lys285, and Lys295. Residue Lys302 forms a Glycyl lysine isopeptide (Lys-Gly) (interchain with G-Cter in SUMO); alternate linkage. Lys302 is covalently cross-linked (Glycyl lysine isopeptide (Lys-Gly) (interchain with G-Cter in ubiquitin); alternate). Glycyl lysine isopeptide (Lys-Gly) (interchain with G-Cter in ubiquitin) cross-links involve residues Lys314, Lys318, and Lys319. Positions 315–336 (LVEKKEYLQEQLEQLQREFNKL) are leucine-zipper. Ser369 carries the phosphoserine; by IKKB modification. Residues 375-412 (SNQRRSPPEEPPDFCCPKCQYQAPDMDTLQIHVMECIE) are interaction with CYLD. Phosphoserine is present on Ser380. A CCHC NOA-type zinc finger spans residues 382 to 412 (PEEPPDFCCPKCQYQAPDMDTLQIHVMECIE). Residue Cys390 participates in Zn(2+) binding. A Glycyl lysine isopeptide (Lys-Gly) (interchain with G-Cter in ubiquitin) cross-link involves residue Lys392. Residues Cys393, His406, and Cys410 each contribute to the Zn(2+) site.

In terms of assembly, homodimer; disulfide-linked. Component of the I-kappa-B-kinase (IKK) core complex consisting of CHUK, IKBKB and IKBKG; probably four alpha/CHUK-beta/IKBKB dimers are associated with four gamma/IKBKG subunits. The IKK core complex seems to associate with regulatory or adapter proteins to form a IKK-signalosome holo-complex. The IKK complex associates with TERF2IP/RAP1, leading to promote IKK-mediated phosphorylation of RELA/p65. Part of a complex composed of NCOA2, NCOA3, CHUK/IKKA, IKBKB, IKBKG and CREBBP. Interacts with COPS3, CYLD, NALP2, TRPC4AP and PIDD1. Interacts with ATM; the complex is exported from the nucleus. Interacts with TRAF6. Interacts with IKBKE. Interacts with TANK; the interaction is enhanced by IKBKE and TBK1. Part of a ternary complex consisting of TANK, IKBKB and IKBKG. Interacts with ZFAND5. Interacts with RIPK2. Interacts with TNIP1 and TNFAIP3; TNIP1 facilitates the TNFAIP3-mediated de-ubiquitination of IKBKG. Interacts with TNFAIP3; the interaction is induced by TNF stimulation and by polyubiquitin. Binds (via UBAN region) polyubiquitin; binds both 'Lys-63'-linked and linear polyubiquitin, with higher affinity for linear ubiquitin. Interacts with NLRP10. Interacts with TANK; this interaction increases in response to DNA damage. Interacts with USP10; this interaction increases in response to DNA damage. Interacts with ZC3H12A; this interaction increases in response to DNA damage. Interacts with IFIT5; the interaction synergizes the recruitment of IKK to MAP3K7 and enhances IKK phosphorylation. Interacts with TRIM29; this interaction induces IKBKG/NEMO ubiquitination and proteolytic degradation. Interacts with TRIM13; this interaction leads to IKBKG/NEMO ubiquitination. Interacts with ARFIP2. Interacts with RIPK1. Interacts with (ubiquitinated) BCL10; interaction with polyubiquitinated BCL10 via both 'Lys-63'-linked and linear ubiquitin is required for TCR-induced NF-kappa-B activation. Interacts with MARCHF2; during the late stages of macrophage viral and bacterial infection; the interaction leads to ubiquitination and degradation of IKBKG/NEMO. In terms of processing, phosphorylation at Ser-68 attenuates aminoterminal homodimerization. Post-translationally, polyubiquitinated on Lys-278 via 'Lys-63'-linked ubiquitin; the ubiquitination is mediated downstream of NOD2 and RIPK2 and probably plays a role in signaling by facilitating interactions with ubiquitin domain-containing proteins and activates the NF-kappa-B pathway. Polyubiquitinated on Lys-278 and Lys-302 through 'Lys-63'-linked ubiquitin; the ubiquitination is mediated by BCL10, MALT1 and TRAF6 and probably plays a role in signaling by facilitating interactions with ubiquitin domain-containing proteins and activates the NF-kappa-B pathway. Monoubiquitinated on Lys-270 and Lys-302; promotes nuclear export. Polyubiquitinated through 'Lys-27' by TRIM23; involved in antiviral innate and inflammatory responses. Linear polyubiquitinated on Lys-111, Lys-143, Lys-226, Lys-246, Lys-270, Lys-278, Lys-285, Lys-295, Lys-302 and Lys-319; the head-to-tail polyubiquitination is mediated by the LUBAC complex and plays a key role in NF-kappa-B activation. Deubiquitinated by USP10 in a TANK-dependent and -independent manner, leading to the negative regulation of NF-kappa-B signaling upon DNA damage. Ubiquitinated at Lys-319 by MARCHF2 following bacterial and viral infection which leads to its degradation. Polyubiquitinated via 'Lys-29'-linked ubiquitin; leading to lysosomal degradation. Sumoylated on Lys-270 and Lys-302 with SUMO1; the modification results in phosphorylation of Ser-85 by ATM leading to a replacement of the sumoylation by mono-ubiquitination on these residues. In terms of processing, neddylated by TRIM40, resulting in stabilization of NFKBIA and down-regulation of NF-kappa-B activity.

The protein resides in the cytoplasm. It is found in the nucleus. Its function is as follows. Regulatory subunit of the IKK core complex which phosphorylates inhibitors of NF-kappa-B thus leading to the dissociation of the inhibitor/NF-kappa-B complex and ultimately the degradation of the inhibitor. Its binding to scaffolding polyubiquitin plays a key role in IKK activation by multiple signaling receptor pathways. Can recognize and bind both 'Lys-63'-linked and linear polyubiquitin upon cell stimulation, with a much highr affinity for linear polyubiquitin. Could be implicated in NF-kappa-B-mediated protection from cytokine toxicity. Essential for viral activation of IRF3. Involved in TLR3- and IFIH1-mediated antiviral innate response; this function requires 'Lys-27'-linked polyubiquitination. The polypeptide is NF-kappa-B essential modulator (Ikbkg) (Mus musculus (Mouse)).